A 358-amino-acid chain; its full sequence is Chorismate synthase (358 aa).

Positions 39–61 (ADIQPFLDKRRPGQSRHTTQRQE) are disordered. NADP(+)-binding residues include Arg-48 and Arg-54. Residues 125-127 (RSS), 237-238 (NA), Gly-284, 299-303 (KPTSS), and Arg-325 contribute to the FMN site.

The protein belongs to the chorismate synthase family. As to quaternary structure, homotetramer. Requires FMNH2 as cofactor.

The enzyme catalyses 5-O-(1-carboxyvinyl)-3-phosphoshikimate = chorismate + phosphate. Its pathway is metabolic intermediate biosynthesis; chorismate biosynthesis; chorismate from D-erythrose 4-phosphate and phosphoenolpyruvate: step 7/7. In terms of biological role, catalyzes the anti-1,4-elimination of the C-3 phosphate and the C-6 proR hydrogen from 5-enolpyruvylshikimate-3-phosphate (EPSP) to yield chorismate, which is the branch point compound that serves as the starting substrate for the three terminal pathways of aromatic amino acid biosynthesis. This reaction introduces a second double bond into the aromatic ring system. This is Chorismate synthase from Sphingopyxis alaskensis (strain DSM 13593 / LMG 18877 / RB2256) (Sphingomonas alaskensis).